Consider the following 209-residue polypeptide: Imidazole glycerol phosphate synthase subunit HisH (209 aa).

The Glutamine amidotransferase type-1 domain maps to 1–205; it reads MIAIIDYGMG…KGVVETWKSS (205 aa). Cys-79 functions as the Nucleophile in the catalytic mechanism. Residues His-180 and Glu-182 contribute to the active site.

Heterodimer of HisH and HisF.

It is found in the cytoplasm. It carries out the reaction 5-[(5-phospho-1-deoxy-D-ribulos-1-ylimino)methylamino]-1-(5-phospho-beta-D-ribosyl)imidazole-4-carboxamide + L-glutamine = D-erythro-1-(imidazol-4-yl)glycerol 3-phosphate + 5-amino-1-(5-phospho-beta-D-ribosyl)imidazole-4-carboxamide + L-glutamate + H(+). The enzyme catalyses L-glutamine + H2O = L-glutamate + NH4(+). Its pathway is amino-acid biosynthesis; L-histidine biosynthesis; L-histidine from 5-phospho-alpha-D-ribose 1-diphosphate: step 5/9. Its function is as follows. IGPS catalyzes the conversion of PRFAR and glutamine to IGP, AICAR and glutamate. The HisH subunit catalyzes the hydrolysis of glutamine to glutamate and ammonia as part of the synthesis of IGP and AICAR. The resulting ammonia molecule is channeled to the active site of HisF. This is Imidazole glycerol phosphate synthase subunit HisH from Bacillus anthracis (strain CDC 684 / NRRL 3495).